The primary structure comprises 397 residues: DnaJ homolog subfamily A member 4 (397 aa).

Positions 4–70 constitute a J domain; sequence ETQYYDILGV…RDVYDQGGEQ (67 aa). Phosphoserine is present on Ser-18. The CR-type zinc-finger motif lies at 122–206; sequence GVTKKLALQK…CSGAKVIREK (85 aa). The Zn(2+) site is built by Cys-135, Cys-138, Cys-151, Cys-154, Cys-178, Cys-181, Cys-194, and Cys-197. CXXCXGXG motif repeat units lie at residues 135-142, 151-158, 178-185, and 194-201; these read CEKCEGVG, CPLCKGRG, CIECKGQG, and CESCSGAK. Cys-394 carries the cysteine methyl ester modification. Residue Cys-394 is the site of S-farnesyl cysteine attachment. Positions 395–397 are cleaved as a propeptide — removed in mature form; the sequence is QTA.

It localises to the membrane. This chain is DnaJ homolog subfamily A member 4 (DNAJA4), found in Homo sapiens (Human).